Here is a 101-residue protein sequence, read N- to C-terminus: Small ribosomal subunit protein uS14 (101 aa).

This sequence belongs to the universal ribosomal protein uS14 family. As to quaternary structure, part of the 30S ribosomal subunit. Contacts proteins S3 and S10.

Its function is as follows. Binds 16S rRNA, required for the assembly of 30S particles and may also be responsible for determining the conformation of the 16S rRNA at the A site. In Ehrlichia chaffeensis (strain ATCC CRL-10679 / Arkansas), this protein is Small ribosomal subunit protein uS14.